A 388-amino-acid chain; its full sequence is Arginine biosynthesis bifunctional protein ArgJ 2 (388 aa).

5 residues coordinate substrate: threonine 145, lysine 167, threonine 178, glutamate 257, and asparagine 381. Threonine 178 acts as the Nucleophile in catalysis.

This sequence belongs to the ArgJ family. In terms of assembly, heterotetramer of two alpha and two beta chains.

Its subcellular location is the cytoplasm. The enzyme catalyses N(2)-acetyl-L-ornithine + L-glutamate = N-acetyl-L-glutamate + L-ornithine. It catalyses the reaction L-glutamate + acetyl-CoA = N-acetyl-L-glutamate + CoA + H(+). It functions in the pathway amino-acid biosynthesis; L-arginine biosynthesis; L-ornithine and N-acetyl-L-glutamate from L-glutamate and N(2)-acetyl-L-ornithine (cyclic): step 1/1. It participates in amino-acid biosynthesis; L-arginine biosynthesis; N(2)-acetyl-L-ornithine from L-glutamate: step 1/4. Its function is as follows. Catalyzes two activities which are involved in the cyclic version of arginine biosynthesis: the synthesis of N-acetylglutamate from glutamate and acetyl-CoA as the acetyl donor, and of ornithine by transacetylation between N(2)-acetylornithine and glutamate. The chain is Arginine biosynthesis bifunctional protein ArgJ 2 from Clostridium acetobutylicum (strain ATCC 824 / DSM 792 / JCM 1419 / IAM 19013 / LMG 5710 / NBRC 13948 / NRRL B-527 / VKM B-1787 / 2291 / W).